The chain runs to 302 residues: Protoheme IX farnesyltransferase 1 (302 aa).

The next 9 membrane-spanning stretches (helical) occupy residues Val30 to Val50, Leu52 to Phe72, Ala102 to Asn122, Leu124 to Leu144, Ile152 to Gly172, Ala178 to Ile198, Cys224 to Met244, Cys245 to Trp265, and Phe282 to Val302.

The protein belongs to the UbiA prenyltransferase family. Protoheme IX farnesyltransferase subfamily.

The protein resides in the cell inner membrane. It catalyses the reaction heme b + (2E,6E)-farnesyl diphosphate + H2O = Fe(II)-heme o + diphosphate. Its pathway is porphyrin-containing compound metabolism; heme O biosynthesis; heme O from protoheme: step 1/1. In terms of biological role, converts heme B (protoheme IX) to heme O by substitution of the vinyl group on carbon 2 of heme B porphyrin ring with a hydroxyethyl farnesyl side group. This Shewanella woodyi (strain ATCC 51908 / MS32) protein is Protoheme IX farnesyltransferase 1.